Here is an 83-residue protein sequence, read N- to C-terminus: Toxin TdNa3 (83 aa).

An N-terminal signal peptide occupies residues 1-20; that stretch reads MKGMIMLISCLMLIDVVVES. The region spanning 21–82 is the LCN-type CS-alpha/beta domain; that stretch reads KNGYIIEPKG…IFDYYNNKCG (62 aa). 4 disulfides stabilise this stretch: Cys31–Cys81, Cys35–Cys57, Cys43–Cys62, and Cys47–Cys64. The residue at position 81 (Cys81) is a Cysteine amide.

The protein belongs to the long (4 C-C) scorpion toxin superfamily. Sodium channel inhibitor family. Beta subfamily. As to expression, expressed by the venom gland.

It localises to the secreted. Its function is as follows. Inhibits the sodium currents (Nav) in an apparent irreversible manner. Produces small depolarization and induces repetitive firing in squid axons. Is specific for arthropods (crickets, triatomides, crabs and squids), but is non-toxic to mice. In Tityus discrepans (Venezuelan scorpion), this protein is Toxin TdNa3.